A 336-amino-acid chain; its full sequence is Glyceraldehyde-3-phosphate dehydrogenase, plasmid (336 aa).

Residues 12 to 13 (RI), aspartate 37, arginine 81, and serine 123 each bind NAD(+). D-glyceraldehyde 3-phosphate is bound by residues 154–156 (SCT) and threonine 185. The Nucleophile role is filled by cysteine 155. Asparagine 186 lines the NAD(+) pocket. Residues arginine 200, 213-214 (TG), and arginine 236 each bind D-glyceraldehyde 3-phosphate. Position 317 (asparagine 317) interacts with NAD(+).

Belongs to the glyceraldehyde-3-phosphate dehydrogenase family. In terms of assembly, homotetramer.

The enzyme catalyses D-glyceraldehyde 3-phosphate + phosphate + NAD(+) = (2R)-3-phospho-glyceroyl phosphate + NADH + H(+). The protein operates within carbohydrate biosynthesis; Calvin cycle. In terms of biological role, could be involved in carbon fixation as a component of the Calvin cycle. Catalyzes the oxidative phosphorylation of glyceraldehyde 3-phosphate (G3P) to 1,3-bisphosphoglycerate (BPG) using the cofactor NAD. The first reaction step involves the formation of a hemiacetal intermediate between G3P and a cysteine residue, and this hemiacetal intermediate is then oxidized to a thioester, with concomitant reduction of NAD to NADH. The reduced NADH is then exchanged with the second NAD, and the thioester is attacked by a nucleophilic inorganic phosphate to produce BPG. This chain is Glyceraldehyde-3-phosphate dehydrogenase, plasmid (cbbGP), found in Cupriavidus necator (strain ATCC 17699 / DSM 428 / KCTC 22496 / NCIMB 10442 / H16 / Stanier 337) (Ralstonia eutropha).